Here is a 315-residue protein sequence, read N- to C-terminus: Acetaldehyde dehydrogenase 2 (315 aa).

Serine 15 to isoleucine 18 is a binding site for NAD(+). Cysteine 135 functions as the Acyl-thioester intermediate in the catalytic mechanism. NAD(+) contacts are provided by residues serine 166–asparagine 174 and asparagine 293.

Belongs to the acetaldehyde dehydrogenase family.

It catalyses the reaction acetaldehyde + NAD(+) + CoA = acetyl-CoA + NADH + H(+). This Paraburkholderia phymatum (strain DSM 17167 / CIP 108236 / LMG 21445 / STM815) (Burkholderia phymatum) protein is Acetaldehyde dehydrogenase 2.